The sequence spans 134 residues: Small ribosomal subunit protein uS12 (134 aa).

Aspartate 89 bears the 3-methylthioaspartic acid mark. Positions 101–134 are disordered; it reads TLDASGVNGRNQSRSKYGTKRPKPGQAAAGGKKK. Low complexity predominate over residues 125 to 134; sequence GQAAAGGKKK.

The protein belongs to the universal ribosomal protein uS12 family. In terms of assembly, part of the 30S ribosomal subunit. Contacts proteins S8 and S17. May interact with IF1 in the 30S initiation complex.

In terms of biological role, with S4 and S5 plays an important role in translational accuracy. Its function is as follows. Interacts with and stabilizes bases of the 16S rRNA that are involved in tRNA selection in the A site and with the mRNA backbone. Located at the interface of the 30S and 50S subunits, it traverses the body of the 30S subunit contacting proteins on the other side and probably holding the rRNA structure together. The combined cluster of proteins S8, S12 and S17 appears to hold together the shoulder and platform of the 30S subunit. This Gemmatimonas aurantiaca (strain DSM 14586 / JCM 11422 / NBRC 100505 / T-27) protein is Small ribosomal subunit protein uS12.